A 550-amino-acid polypeptide reads, in one-letter code: Glucose-6-phosphate isomerase 1 (550 aa).

The Proton donor role is filled by Glu-358. Catalysis depends on residues His-389 and Lys-513.

It belongs to the GPI family.

It localises to the cytoplasm. It carries out the reaction alpha-D-glucose 6-phosphate = beta-D-fructose 6-phosphate. Its pathway is carbohydrate biosynthesis; gluconeogenesis. It functions in the pathway carbohydrate degradation; glycolysis; D-glyceraldehyde 3-phosphate and glycerone phosphate from D-glucose: step 2/4. Functionally, catalyzes the reversible isomerization of glucose-6-phosphate to fructose-6-phosphate. This Streptomyces coelicolor (strain ATCC BAA-471 / A3(2) / M145) protein is Glucose-6-phosphate isomerase 1.